The chain runs to 334 residues: MMNLKYLLFFCLVQALHYCYAYGDPSLSNELDRFNPCPYSDDTVKMIILTRENKKHDFYTLNTIKNHNEFKKSTIKHQVVFITHGFTSTATAENFLAMAEALLDKGNYLVILIDWRVAACTNEMAGVKLAYYSYAASNTRLVGNYIATVTKMLVQQYNVPMANIRLIGHSLGAHTSGFAGKKVQELRLGKYSEIIGLDPAGPSFKSQECSQRICETDANYVQIIHTSNHLGTLVTLGTVDFYMNNGYNQPGCGLPIIGETCSHTRAVKYFTECIRHECCLIGVPQSKNPQPVSKCTRNECVCVGLNAKTYPKTGSFYVPVESKAPYCNNKGKII.

Positions 1–23 (MMNLKYLLFFCLVQALHYCYAYG) are cleaved as a signal peptide. Positions 24 to 33 (DPSLSNELDR) are excised as a propeptide. Cysteine 37 and cysteine 120 are disulfide-bonded. The active-site Nucleophile is the serine 170. Aspartate 198 acts as the Charge relay system in catalysis. 2 cysteine pairs are disulfide-bonded: cysteine 209-cysteine 214 and cysteine 252-cysteine 261. Histidine 263 serves as the catalytic Charge relay system. Cystine bridges form between cysteine 278–cysteine 302, cysteine 279–cysteine 327, and cysteine 295–cysteine 300.

The protein belongs to the AB hydrolase superfamily. Lipase family. Post-translationally, not glycosylated. Expressed by the venom gland.

It is found in the secreted. The catalysed reaction is a 1,2-diacyl-sn-glycero-3-phosphocholine + H2O = a 2-acyl-sn-glycero-3-phosphocholine + a fatty acid + H(+). Catalyzes the hydrolysis of phosphatidylcholine with phospholipase A1 activity (3.6 U/ml). May act as an allergen and induce hemolytic activity. In vivo, a mixture of this protein and Ves a 1.02 is able to paralyze crickets. This is Phospholipase A1 1 from Vespa affinis (Lesser banded hornet).